The chain runs to 194 residues: ATP-dependent Clp protease proteolytic subunit (194 aa).

Ser-98 (nucleophile) is an active-site residue. Residue His-123 is part of the active site.

Belongs to the peptidase S14 family. As to quaternary structure, fourteen ClpP subunits assemble into 2 heptameric rings which stack back to back to give a disk-like structure with a central cavity, resembling the structure of eukaryotic proteasomes.

The protein resides in the cytoplasm. The enzyme catalyses Hydrolysis of proteins to small peptides in the presence of ATP and magnesium. alpha-casein is the usual test substrate. In the absence of ATP, only oligopeptides shorter than five residues are hydrolyzed (such as succinyl-Leu-Tyr-|-NHMec, and Leu-Tyr-Leu-|-Tyr-Trp, in which cleavage of the -Tyr-|-Leu- and -Tyr-|-Trp bonds also occurs).. In terms of biological role, cleaves peptides in various proteins in a process that requires ATP hydrolysis. Has a chymotrypsin-like activity. Plays a major role in the degradation of misfolded proteins. This Staphylococcus carnosus (strain TM300) protein is ATP-dependent Clp protease proteolytic subunit.